Consider the following 265-residue polypeptide: 14-3-3-like protein GF14-D (265 aa).

A disordered region spans residues 244 to 265 (DANDDGGDEIKEAAAPKEPGDQ). Positions 251–265 (DEIKEAAAPKEPGDQ) are enriched in basic and acidic residues.

The protein belongs to the 14-3-3 family. Interacts with BZR1. Interacts with ABI5.

Its function is as follows. Is associated with a DNA binding complex that binds to the G box, a well-characterized cis-acting DNA regulatory element found in plant genes. This Oryza sativa subsp. japonica (Rice) protein is 14-3-3-like protein GF14-D (GF14D).